Here is a 608-residue protein sequence, read N- to C-terminus: Chaperone protein HtpG (608 aa).

The interval 1 to 332 is a; substrate-binding; that stretch reads MQFQTEVNQL…VEDLPLNVSR (332 aa). The segment at 333-536 is b; it reads EILQENQILK…KNKPDFAMQQ (204 aa). The interval 537-608 is c; sequence LLKQMGQEQN…LTKIINKAFS (72 aa).

Belongs to the heat shock protein 90 family. In terms of assembly, homodimer.

The protein resides in the cytoplasm. Molecular chaperone. Has ATPase activity. This chain is Chaperone protein HtpG, found in Campylobacter jejuni subsp. jejuni serotype O:2 (strain ATCC 700819 / NCTC 11168).